The chain runs to 485 residues: Solute carrier family 35 member F4 (485 aa).

2 stretches are compositionally biased toward polar residues: residues 32 to 42 (SQKSTTRSSVT) and 50 to 64 (CPSS…LSPL). 2 disordered regions span residues 32–64 (SQKS…LSPL) and 78–111 (QSRG…SSQE). Residues 88–98 (RRVERQSRSGD) are compositionally biased toward basic and acidic residues. Positions 99–111 (DGTQTRPESSSQE) are enriched in polar residues. A run of 10 helical transmembrane segments spans residues 129 to 149 (IWGL…TQIV), 156 to 176 (FYCP…FFPV), 217 to 234 (APFS…LLAL), 241 to 261 (DVSA…WIVL), 265 to 285 (FMGV…MMAY), 294 to 314 (IIGV…KVLF), 329 to 349 (FVST…IILY), 359 to 381 (FAAL…NILV), 383 to 405 (VGVV…PGNA), and 414 to 434 (VIFN…FLLM). The EamA domain maps to 225–285 (LTNYLYLLAL…AITGIVMMAY (61 aa)).

This sequence belongs to the SLC35F solute transporter family.

The protein resides in the membrane. Its function is as follows. Putative solute transporter. This chain is Solute carrier family 35 member F4 (Slc35f4), found in Mus musculus (Mouse).